The sequence spans 469 residues: UDP-N-acetylmuramate--L-alanine ligase (469 aa).

Residue 114–120 coordinates ATP; the sequence is GTHGKTT.

The protein belongs to the MurCDEF family.

The protein resides in the cytoplasm. The enzyme catalyses UDP-N-acetyl-alpha-D-muramate + L-alanine + ATP = UDP-N-acetyl-alpha-D-muramoyl-L-alanine + ADP + phosphate + H(+). It functions in the pathway cell wall biogenesis; peptidoglycan biosynthesis. Cell wall formation. The polypeptide is UDP-N-acetylmuramate--L-alanine ligase (Sinorhizobium fredii (strain NBRC 101917 / NGR234)).